A 132-amino-acid polypeptide reads, in one-letter code: Small ribosomal subunit protein uS11 (132 aa).

Residues 108–132 (GRIEDVTPVPHDSCRPKGGRRGRRV) are disordered.

Belongs to the universal ribosomal protein uS11 family. Part of the 30S ribosomal subunit.

Its function is as follows. Located on the platform of the 30S subunit. In Methanoregula boonei (strain DSM 21154 / JCM 14090 / 6A8), this protein is Small ribosomal subunit protein uS11.